A 561-amino-acid polypeptide reads, in one-letter code: Serine palmitoyltransferase 2 (561 aa).

A helical membrane pass occupies residues 57-77 (PYYISLLTYLNYLILIILGHV). An N6-(pyridoxal phosphate)lysine modification is found at lysine 366. A helical transmembrane segment spans residues 443–463 (LGFIVYGVADSPVIPLLLYCP).

Belongs to the class-II pyridoxal-phosphate-dependent aminotransferase family. In terms of assembly, LCB1 and LCB2 encode essential subunits of the enzyme and form a heterodimer. Component of the SPOTS complex, at least composed of LCB1/2 (LCB1 and/or LCB2), ORM1/2 (ORM1 and/or ORM2), SAC1 and TSC3. Interacts with LCB1 and TSC3. Pyridoxal 5'-phosphate is required as a cofactor.

Its subcellular location is the cytoplasm. It localises to the endoplasmic reticulum. The protein resides in the membrane. It catalyses the reaction L-serine + hexadecanoyl-CoA + H(+) = 3-oxosphinganine + CO2 + CoA. It functions in the pathway lipid metabolism; sphingolipid metabolism. Catalytic subunit of serine palmitoyltransferase (SPT), which catalyzes the committed step in the synthesis of sphingolipids, the condensation of serine with palmitoyl CoA to form the long chain base 3-ketosphinganine. The sequence is that of Serine palmitoyltransferase 2 (LCB2) from Saccharomyces cerevisiae (strain ATCC 204508 / S288c) (Baker's yeast).